A 530-amino-acid chain; its full sequence is 4,4'-diapolycopene aldehyde oxidase (530 aa).

Active-site residues include glutamate 234 and cysteine 268.

Belongs to the aldehyde dehydrogenase family.

The catalysed reaction is all-trans-4,4'-diapolycopen-4-al + A + H2O = all-trans-4,4'-diapolycopen-4-oate + AH2 + H(+). It catalyses the reaction all-trans-4,4'-diapolycopene-4,4'-dial + 2 A + 2 H2O = all-trans-4,4'-diapolycopene-4,4'-dioate + 2 AH2 + 2 H(+). The protein operates within carotenoid biosynthesis. Involved in the biosynthesis of C30 carotenoids. Catalyzes the oxidation of 4,4'-diapolycopene-4,4'-dial to yield 4,4'-diapolycopene-4,4'-dioic acid. Also able to catalyze the oxidation of 4,4'-diapolycopen-4-al to yield 4,4'-diapolycopen-4-oic acid. In Methylomonas sp, this protein is 4,4'-diapolycopene aldehyde oxidase.